The chain runs to 275 residues: MIPNHILILGSPNSGKLRIANLISRNEEIPQLEDAESHSGLIIKTSLRTKYYFLKLNILIDEYLESKETPDESKLSELHKWYQEFKSEEFGELREVLDGLMFTINMKTDSISFIGEALEIIEQIKLSLGDEESFHNWGGFIAVVGSCPVNQVVEDDVVLEIEDMVLSHGLEFINLSTEGENEYKEKQGKDRIVELVESHDWTNLEMVKVDSKQYEANKLAKIESMKHKLINEKEELDLDDIFKKLNLARDHASSLTQNEKDKYANKIIDEIIDFL.

The protein belongs to the IRC6 family.

Involved in gross chromosomal rearrangements (GCRs) and telomere healing. This chain is Increased recombination centers protein 6 (IRC6), found in Candida dubliniensis (strain CD36 / ATCC MYA-646 / CBS 7987 / NCPF 3949 / NRRL Y-17841) (Yeast).